The primary structure comprises 458 residues: Glycogen synthase (458 aa).

An ADP-alpha-D-glucose-binding site is contributed by Lys15.

It belongs to the glycosyltransferase 1 family. Bacterial/plant glycogen synthase subfamily.

It catalyses the reaction [(1-&gt;4)-alpha-D-glucosyl](n) + ADP-alpha-D-glucose = [(1-&gt;4)-alpha-D-glucosyl](n+1) + ADP + H(+). The protein operates within glycan biosynthesis; glycogen biosynthesis. In terms of biological role, synthesizes alpha-1,4-glucan chains using ADP-glucose. This Gloeobacter violaceus (strain ATCC 29082 / PCC 7421) protein is Glycogen synthase.